The sequence spans 400 residues: tRNA(Ile)-lysidine synthase (400 aa).

25–30 (SGGVDS) is an ATP binding site.

Belongs to the tRNA(Ile)-lysidine synthase family.

It is found in the cytoplasm. The catalysed reaction is cytidine(34) in tRNA(Ile2) + L-lysine + ATP = lysidine(34) in tRNA(Ile2) + AMP + diphosphate + H(+). Functionally, ligates lysine onto the cytidine present at position 34 of the AUA codon-specific tRNA(Ile) that contains the anticodon CAU, in an ATP-dependent manner. Cytidine is converted to lysidine, thus changing the amino acid specificity of the tRNA from methionine to isoleucine. The polypeptide is tRNA(Ile)-lysidine synthase (Francisella philomiragia subsp. philomiragia (strain ATCC 25017 / CCUG 19701 / FSC 153 / O#319-036)).